Here is a 195-residue protein sequence, read N- to C-terminus: uncharacterized protein (195 aa).

Positions 10-70 (EETVARLLQA…ATAYEVLRRQ (61 aa)) constitute an HTH tetR-type domain. The segment at residues 33–52 (SAAVITKRAGVSVGALFRHF) is a DNA-binding region (H-T-H motif).

This is an uncharacterized protein from Mycobacterium tuberculosis (strain CDC 1551 / Oshkosh).